Consider the following 564-residue polypeptide: Serine/threonine-protein kinase PknA (564 aa).

The region spanning 9 to 271 is the Protein kinase domain; the sequence is YRVIKTLGSG…TAREMLEALQ (263 aa). ATP contacts are provided by residues 15–23 and K40; that span reads LGSGGFGET. The active-site Proton acceptor is the D139. A compositionally biased stretch (polar residues) spans 360 to 406; it reads QPVTQTTSLPSETTISNNDTPTVEPSPTDTPETPISQTVTQDPTPQA. The disordered stretch occupies residues 360–458; that stretch reads QPVTQTTSLP…PVEATDRPSP (99 aa). Low complexity predominate over residues 428-445; it reads TTEPTTSVPQPTTPSEPQ.

This sequence belongs to the protein kinase superfamily. Ser/Thr protein kinase family.

It carries out the reaction L-seryl-[protein] + ATP = O-phospho-L-seryl-[protein] + ADP + H(+). It catalyses the reaction L-threonyl-[protein] + ATP = O-phospho-L-threonyl-[protein] + ADP + H(+). In terms of biological role, probably required for both normal cellular growth and differentiation. Inactivation of pknA leads to colonies that appear light green and rough in the absence of combined nitrogen. The polypeptide is Serine/threonine-protein kinase PknA (pknA) (Nostoc sp. (strain PCC 7120 / SAG 25.82 / UTEX 2576)).